The following is a 349-amino-acid chain: Phosphoribosylformylglycinamidine cyclo-ligase (349 aa).

Belongs to the AIR synthase family.

Its subcellular location is the cytoplasm. The catalysed reaction is 2-formamido-N(1)-(5-O-phospho-beta-D-ribosyl)acetamidine + ATP = 5-amino-1-(5-phospho-beta-D-ribosyl)imidazole + ADP + phosphate + H(+). The protein operates within purine metabolism; IMP biosynthesis via de novo pathway; 5-amino-1-(5-phospho-D-ribosyl)imidazole from N(2)-formyl-N(1)-(5-phospho-D-ribosyl)glycinamide: step 2/2. This chain is Phosphoribosylformylglycinamidine cyclo-ligase, found in Albidiferax ferrireducens (strain ATCC BAA-621 / DSM 15236 / T118) (Rhodoferax ferrireducens).